A 165-amino-acid chain; its full sequence is Putative TRAP transporter small permease protein HI_0051 (165 aa).

The next 4 membrane-spanning stretches (helical) occupy residues 20 to 40 (LEYL…FNSV), 51 to 71 (FSEE…IILV), 94 to 114 (IVLI…AYGA), and 136 to 156 (LYLA…FSMI).

The protein belongs to the TRAP transporter small permease family.

It localises to the cell inner membrane. The sequence is that of Putative TRAP transporter small permease protein HI_0051 from Haemophilus influenzae (strain ATCC 51907 / DSM 11121 / KW20 / Rd).